We begin with the raw amino-acid sequence, 288 residues long: MSPEELKQLELLRNRFAQLTSNLGSLRTSVSNSNPLPTYESLQASVNILQANIRSIQDIATENAGLFQRLAIHPSTNFPGRTQEHILTQLLRKKLEPNVESWVEEARATARGVGVDASKLAGGVHRRGEHDYDDEGTYGMDEDGDDAPQDPFSEQWADMLDNFQQTLQQYVTVQVKKKYTAEERAAGIENVRTGLRQTLEESEDDDEDEEEEEEDEEEDEAAAAAGNAGGLATGAGGSAAAGGGMFGAIEPEHIFYLQAQGNLQLPGNVPIESKRIQTVPTRRVAPPR.

The stretch at 4–58 forms a coiled coil; the sequence is EELKQLELLRNRFAQLTSNLGSLRTSVSNSNPLPTYESLQASVNILQANIRSIQD. Disordered stretches follow at residues 122–150, 191–245, and 266–288; these read GGVHRRGEHDYDDEGTYGMDEDGDDAPQD, VRTG…GGGM, and PGNVPIESKRIQTVPTRRVAPPR. 2 stretches are compositionally biased toward acidic residues: residues 131–148 and 200–221; these read DYDDEGTYGMDEDGDDAP and EESEDDDEDEEEEEEDEEEDEA. A coiled-coil region spans residues 180–228; sequence TAEERAAGIENVRTGLRQTLEESEDDDEDEEEEEEDEEEDEAAAAAGNA. The span at 227–245 shows a compositional bias: gly residues; that stretch reads NAGGLATGAGGSAAAGGGM.

The protein belongs to the Mediator complex subunit 8 family. Component of the Mediator complex.

It is found in the nucleus. In terms of biological role, component of the Mediator complex, a coactivator involved in the regulated transcription of nearly all RNA polymerase II-dependent genes. Mediator functions as a bridge to convey information from gene-specific regulatory proteins to the basal RNA polymerase II transcription machinery. Mediator is recruited to promoters by direct interactions with regulatory proteins and serves as a scaffold for the assembly of a functional preinitiation complex with RNA polymerase II and the general transcription factors. In Chaetomium globosum (strain ATCC 6205 / CBS 148.51 / DSM 1962 / NBRC 6347 / NRRL 1970) (Soil fungus), this protein is Mediator of RNA polymerase II transcription subunit 8 (MED8).